The sequence spans 215 residues: Cytochrome b6 (215 aa).

The chain crosses the membrane as a helical span at residues Ile32 to Phe52. Heme c is bound at residue Cys35. Heme b is bound by residues His86 and His100. 3 consecutive transmembrane segments (helical) span residues Ala90–Phe110, Leu116–Tyr136, and Leu186–Ile206. The heme b site is built by His187 and His202.

The protein belongs to the cytochrome b family. PetB subfamily. As to quaternary structure, the 4 large subunits of the cytochrome b6-f complex are cytochrome b6, subunit IV (17 kDa polypeptide, PetD), cytochrome f and the Rieske protein, while the 4 small subunits are PetG, PetL, PetM and PetN. The complex functions as a dimer. The cofactor is heme b. Heme c serves as cofactor.

It localises to the plastid. The protein resides in the chloroplast thylakoid membrane. Component of the cytochrome b6-f complex, which mediates electron transfer between photosystem II (PSII) and photosystem I (PSI), cyclic electron flow around PSI, and state transitions. The protein is Cytochrome b6 of Daucus carota (Wild carrot).